A 160-amino-acid chain; its full sequence is MADGNGTQETQDQAPAINAMVQYTKDFSFENPNAPRSLGPQEKAPNIAIQVHVNAQQLAESDFEVNIVLEGSAGEGANTLFKFELDYAGMFRLLNISPNDMHPVVMIECPRLLFPFARQIIADAVRSGGFPPLYIDPIDFAALYRKRLDEVAASAPQLKS.

Belongs to the SecB family. In terms of assembly, homotetramer, a dimer of dimers. One homotetramer interacts with 1 SecA dimer.

It localises to the cytoplasm. Its function is as follows. One of the proteins required for the normal export of preproteins out of the cell cytoplasm. It is a molecular chaperone that binds to a subset of precursor proteins, maintaining them in a translocation-competent state. It also specifically binds to its receptor SecA. The chain is Protein-export protein SecB from Beijerinckia indica subsp. indica (strain ATCC 9039 / DSM 1715 / NCIMB 8712).